Consider the following 74-residue polypeptide: DNA gyrase inhibitor YacG (74 aa).

Residues Cys-7, Cys-10, Cys-26, and Cys-30 each coordinate Zn(2+).

This sequence belongs to the DNA gyrase inhibitor YacG family. Interacts with GyrB. Zn(2+) serves as cofactor.

Functionally, inhibits all the catalytic activities of DNA gyrase by preventing its interaction with DNA. Acts by binding directly to the C-terminal domain of GyrB, which probably disrupts DNA binding by the gyrase. The sequence is that of DNA gyrase inhibitor YacG from Shewanella denitrificans (strain OS217 / ATCC BAA-1090 / DSM 15013).